Reading from the N-terminus, the 271-residue chain is 3-methyl-2-oxobutanoate hydroxymethyltransferase (271 aa).

Mg(2+) is bound by residues aspartate 52 and aspartate 91. Residues 52 to 53 (DS), aspartate 91, and lysine 121 contribute to the 3-methyl-2-oxobutanoate site. Glutamate 123 provides a ligand contact to Mg(2+). Glutamate 189 (proton acceptor) is an active-site residue.

The protein belongs to the PanB family. In terms of assembly, homodecamer; pentamer of dimers. The cofactor is Mg(2+).

Its subcellular location is the cytoplasm. It catalyses the reaction 3-methyl-2-oxobutanoate + (6R)-5,10-methylene-5,6,7,8-tetrahydrofolate + H2O = 2-dehydropantoate + (6S)-5,6,7,8-tetrahydrofolate. It functions in the pathway cofactor biosynthesis; (R)-pantothenate biosynthesis; (R)-pantoate from 3-methyl-2-oxobutanoate: step 1/2. In terms of biological role, catalyzes the reversible reaction in which hydroxymethyl group from 5,10-methylenetetrahydrofolate is transferred onto alpha-ketoisovalerate to form ketopantoate. The sequence is that of 3-methyl-2-oxobutanoate hydroxymethyltransferase from Acidothermus cellulolyticus (strain ATCC 43068 / DSM 8971 / 11B).